A 350-amino-acid polypeptide reads, in one-letter code: Probable L-aspartate decarboxylase (350 aa).

K206 is modified (N6-(pyridoxal phosphate)lysine).

It belongs to the group II decarboxylase family. MfnA subfamily. Requires pyridoxal 5'-phosphate as cofactor.

The catalysed reaction is L-aspartate + H(+) = beta-alanine + CO2. It participates in cofactor biosynthesis; coenzyme A biosynthesis. Its function is as follows. Catalyzes the decarboxylation of L-aspartate to produce beta-alanine. In Haloarcula marismortui (strain ATCC 43049 / DSM 3752 / JCM 8966 / VKM B-1809) (Halobacterium marismortui), this protein is Probable L-aspartate decarboxylase.